A 280-amino-acid chain; its full sequence is 2-dehydro-3-deoxyphosphooctonate aldolase (280 aa).

It belongs to the KdsA family.

It is found in the cytoplasm. The catalysed reaction is D-arabinose 5-phosphate + phosphoenolpyruvate + H2O = 3-deoxy-alpha-D-manno-2-octulosonate-8-phosphate + phosphate. Its pathway is carbohydrate biosynthesis; 3-deoxy-D-manno-octulosonate biosynthesis; 3-deoxy-D-manno-octulosonate from D-ribulose 5-phosphate: step 2/3. It functions in the pathway bacterial outer membrane biogenesis; lipopolysaccharide biosynthesis. This is 2-dehydro-3-deoxyphosphooctonate aldolase from Thioalkalivibrio sulfidiphilus (strain HL-EbGR7).